We begin with the raw amino-acid sequence, 291 residues long: Venom metalloproteinase inhibitor DM43 (291 aa).

Ig-like V-type domains lie at 22–79 (TNVT…ILTS) and 114–171 (GLET…PASA). A glycan (N-linked (GlcNAc...) asparagine) is linked at Asn-23. 2 cysteine pairs are disulfide-bonded: Cys-28–Cys-74 and Cys-121–Cys-163. Asn-156, Asn-160, and Asn-175 each carry an N-linked (GlcNAc...) asparagine glycan. Residues 191 to 288 (PKANFYILND…DSNVLELDLS (98 aa)) form the Ig-like V-type 3 domain. Cys-213 and Cys-265 are disulfide-bonded.

As to quaternary structure, homodimer. In terms of processing, N-glycosylated. In terms of tissue distribution, blood and milk.

Its function is as follows. Metalloproteinase inhibitor. The chain is Venom metalloproteinase inhibitor DM43 from Didelphis marsupialis (Southern opossum).